Here is a 268-residue protein sequence, read N- to C-terminus: DNA ligase (268 aa).

Lysine 41 functions as the N6-AMP-lysine intermediate in the catalytic mechanism. Positions 111, 181, and 187 each coordinate ATP.

This sequence belongs to the ATP-dependent DNA ligase family. Requires a divalent metal cation as cofactor.

It catalyses the reaction ATP + (deoxyribonucleotide)n-3'-hydroxyl + 5'-phospho-(deoxyribonucleotide)m = (deoxyribonucleotide)n+m + AMP + diphosphate.. Catalyzes efficient strand joining on a single nicked DNA. The sequence is that of DNA ligase (ligA) from Haemophilus influenzae (strain ATCC 51907 / DSM 11121 / KW20 / Rd).